The chain runs to 54 residues: Large ribosomal subunit protein bL33B (54 aa).

It belongs to the bacterial ribosomal protein bL33 family.

This Mycolicibacterium smegmatis (strain ATCC 700084 / mc(2)155) (Mycobacterium smegmatis) protein is Large ribosomal subunit protein bL33B.